We begin with the raw amino-acid sequence, 264 residues long: Phosphonoacetaldehyde hydrolase (264 aa).

The active-site Nucleophile is the Asp-9. The Mg(2+) site is built by Asp-9 and Ala-11. The Schiff-base intermediate with substrate role is filled by Lys-50. A Mg(2+)-binding site is contributed by Asp-183.

Belongs to the HAD-like hydrolase superfamily. PhnX family. As to quaternary structure, homodimer. It depends on Mg(2+) as a cofactor.

The catalysed reaction is phosphonoacetaldehyde + H2O = acetaldehyde + phosphate + H(+). Its function is as follows. Involved in phosphonate degradation. The sequence is that of Phosphonoacetaldehyde hydrolase from Bacillus cereus (strain AH187).